Here is a 266-residue protein sequence, read N- to C-terminus: F-box/kelch-repeat protein At4g39560 (266 aa).

The 47-residue stretch at 24 to 70 (STQILSLPVDLLISILARVSRLDYPILSLVSKSFRSLIASPELYETR) folds into the F-box domain. 3 Kelch repeats span residues 130-176 (DIYN…VIDG), 178-223 (IYVA…KSAV), and 226-266 (EAIC…LLVA).

This chain is F-box/kelch-repeat protein At4g39560, found in Arabidopsis thaliana (Mouse-ear cress).